The chain runs to 237 residues: Leucyl/phenylalanyl-tRNA--protein transferase (237 aa).

It belongs to the L/F-transferase family.

It localises to the cytoplasm. It catalyses the reaction N-terminal L-lysyl-[protein] + L-leucyl-tRNA(Leu) = N-terminal L-leucyl-L-lysyl-[protein] + tRNA(Leu) + H(+). The enzyme catalyses N-terminal L-arginyl-[protein] + L-leucyl-tRNA(Leu) = N-terminal L-leucyl-L-arginyl-[protein] + tRNA(Leu) + H(+). The catalysed reaction is L-phenylalanyl-tRNA(Phe) + an N-terminal L-alpha-aminoacyl-[protein] = an N-terminal L-phenylalanyl-L-alpha-aminoacyl-[protein] + tRNA(Phe). Functionally, functions in the N-end rule pathway of protein degradation where it conjugates Leu, Phe and, less efficiently, Met from aminoacyl-tRNAs to the N-termini of proteins containing an N-terminal arginine or lysine. This chain is Leucyl/phenylalanyl-tRNA--protein transferase (aat), found in Vibrio vulnificus (strain CMCP6).